The following is a 206-amino-acid chain: Small ribosomal subunit protein uS4 (206 aa).

Residues 96-156 enclose the S4 RNA-binding domain; that stretch reads RRLDNVVYRM…EKSKNQLRIK (61 aa).

It belongs to the universal ribosomal protein uS4 family. In terms of assembly, part of the 30S ribosomal subunit. Contacts protein S5. The interaction surface between S4 and S5 is involved in control of translational fidelity.

Functionally, one of the primary rRNA binding proteins, it binds directly to 16S rRNA where it nucleates assembly of the body of the 30S subunit. Its function is as follows. With S5 and S12 plays an important role in translational accuracy. The polypeptide is Small ribosomal subunit protein uS4 (Hahella chejuensis (strain KCTC 2396)).